The following is a 141-amino-acid chain: 16 kDa protein (141 aa).

The tract at residues E95–E116 is disordered. Positions T100–K113 are enriched in basic residues.

The sequence is that of 16 kDa protein from Tobacco rattle virus (strain PSG).